A 209-amino-acid polypeptide reads, in one-letter code: Ion-translocating oxidoreductase complex subunit G (209 aa).

Residues 1–8 (MLTAIRKN) are Cytoplasmic-facing. A helical transmembrane segment spans residues 9 to 29 (GLILAVFACVSTGLVALTYAL). Topologically, residues 30 to 209 (TAEQIQQQEQ…HNQPNPCEGQ (180 aa)) are periplasmic. An FMN phosphoryl threonine modification is found at T175.

It belongs to the RnfG family. As to quaternary structure, the complex is composed of six subunits: RnfA, RnfB, RnfC, RnfD, RnfE and RnfG. It depends on FMN as a cofactor.

The protein resides in the cell inner membrane. Part of a membrane-bound complex that couples electron transfer with translocation of ions across the membrane. This is Ion-translocating oxidoreductase complex subunit G from Vibrio cholerae serotype O1 (strain ATCC 39541 / Classical Ogawa 395 / O395).